The primary structure comprises 1415 residues: Uveal autoantigen with coiled-coil domains and ankyrin repeats (1415 aa).

ANK repeat units lie at residues glutamate 69–threonine 98, alanine 102–histidine 131, glutamine 135–alanine 164, aspartate 168–serine 197, and glutamine 201–leucine 230. A coiled-coil region spans residues valine 288 to lysine 376. The ANK 6 repeat unit spans residues glutamate 617–valine 646. Residues threonine 759 to alanine 1381 adopt a coiled-coil conformation. Residue lysine 1034 forms a Glycyl lysine isopeptide (Lys-Gly) (interchain with G-Cter in SUMO2) linkage. A compositionally biased stretch (basic and acidic residues) spans leucine 1186 to serine 1201. Residues leucine 1186–serine 1205 are disordered.

In terms of assembly, component of the apoptosome complex, composed of APAF1, pro-caspase-9 and UACA. In the complex, it probably interacts directly with APAF1. Interacts with LGALS3, ARF6 and ACTB. Interacts with RAB39A. In terms of tissue distribution, highly expressed in adrenal, testis, kidney and large intestine.

It localises to the nucleus. The protein resides in the cytoplasm. Its subcellular location is the cytoskeleton. In terms of biological role, regulates APAF1 expression and plays an important role in the regulation of stress-induced apoptosis. Promotes apoptosis by regulating three pathways, apoptosome up-regulation, LGALS3/galectin-3 down-regulation and NF-kappa-B inactivation. Regulates the redistribution of APAF1 into the nucleus after proapoptotic stress. Down-regulates the expression of LGALS3 by inhibiting NFKB1. Modulates isoactin dynamics to regulate the morphological alterations required for cell growth and motility. Interaction with ARF6 may modulate cell shape and motility after injury. May be involved in multiple neurite formation. This chain is Uveal autoantigen with coiled-coil domains and ankyrin repeats (UACA), found in Canis lupus familiaris (Dog).